We begin with the raw amino-acid sequence, 179 residues long: Large ribosomal subunit protein uL6 (179 aa).

Belongs to the universal ribosomal protein uL6 family. In terms of assembly, part of the 50S ribosomal subunit.

Functionally, this protein binds to the 23S rRNA, and is important in its secondary structure. It is located near the subunit interface in the base of the L7/L12 stalk, and near the tRNA binding site of the peptidyltransferase center. This chain is Large ribosomal subunit protein uL6, found in Synechococcus elongatus (strain ATCC 33912 / PCC 7942 / FACHB-805) (Anacystis nidulans R2).